A 92-amino-acid chain; its full sequence is Long neurotoxin 77 (92 aa).

The N-terminal stretch at 1-21 is a signal peptide; that stretch reads MKTLLLTLVVVTIVCLDLGDS. 5 disulfide bridges follow: C24–C41, C34–C62, C47–C51, C66–C77, and C78–C83.

Belongs to the three-finger toxin family. Long-chain subfamily. Type II alpha-neurotoxin sub-subfamily. Expressed by the venom gland.

The protein localises to the secreted. Its function is as follows. Binds with high affinity to muscular (alpha-1/CHRNA1) and neuronal (alpha-7/CHRNA7) nicotinic acetylcholine receptor (nAChR) and inhibits acetylcholine from binding to the receptor, thereby impairing neuromuscular and neuronal transmission. The chain is Long neurotoxin 77 from Drysdalia coronoides (White-lipped snake).